A 451-amino-acid chain; its full sequence is UPF0210 protein NMA1908 (451 aa).

It belongs to the UPF0210 family. As to quaternary structure, homodimer.

The polypeptide is UPF0210 protein NMA1908 (Neisseria meningitidis serogroup A / serotype 4A (strain DSM 15465 / Z2491)).